The chain runs to 234 residues: Sugar fermentation stimulation protein A (234 aa).

Positions 201 to 220 form a DNA-binding region, H-T-H motif; it reads LLSEAQQRGVEILAYKAEIS.

It belongs to the SfsA family.

Its function is as follows. Binds to DNA non-specifically. Could be a regulatory factor involved in maltose metabolism. This is Sugar fermentation stimulation protein A from Shigella flexneri.